Consider the following 197-residue polypeptide: Dephospho-CoA kinase (197 aa).

Residues 3–197 (VYGLTGGIGS…QSLLHTHQNT (195 aa)) form the DPCK domain. 11 to 16 (GSGKTT) provides a ligand contact to ATP.

The protein belongs to the CoaE family.

The protein resides in the cytoplasm. The catalysed reaction is 3'-dephospho-CoA + ATP = ADP + CoA + H(+). It functions in the pathway cofactor biosynthesis; coenzyme A biosynthesis; CoA from (R)-pantothenate: step 5/5. Functionally, catalyzes the phosphorylation of the 3'-hydroxyl group of dephosphocoenzyme A to form coenzyme A. The protein is Dephospho-CoA kinase of Hydrogenovibrio crunogenus (strain DSM 25203 / XCL-2) (Thiomicrospira crunogena).